We begin with the raw amino-acid sequence, 763 residues long: Phosphoglycerol transferase I (763 aa).

Helical transmembrane passes span 1 to 21, 24 to 44, 77 to 97, and 108 to 128; these read MSELLSVALFLASVLVYAWKA, NTWWFAATLTVLGLFVILNIT, ILPGIGIVLALVGVFGALGWI, and VGYSLLALLLALGSVDASPAF.

This sequence belongs to the OpgB family.

The protein localises to the cell inner membrane. The enzyme catalyses a phosphatidylglycerol + a membrane-derived-oligosaccharide D-glucose = a 1,2-diacyl-sn-glycerol + a membrane-derived-oligosaccharide 6-(glycerophospho)-D-glucose.. Its pathway is glycan metabolism; osmoregulated periplasmic glucan (OPG) biosynthesis. Functionally, transfers a phosphoglycerol residue from phosphatidylglycerol to the membrane-bound nascent glucan backbones. This chain is Phosphoglycerol transferase I, found in Salmonella arizonae (strain ATCC BAA-731 / CDC346-86 / RSK2980).